An 81-amino-acid polypeptide reads, in one-letter code: Toxin MIT1 (81 aa).

5 disulfide bridges follow: C7–C19, C13–C31, C18–C59, C41–C67, and C61–C77.

The protein belongs to the AVIT (prokineticin) family. Expressed by the venom gland.

The protein resides in the secreted. In terms of biological role, potent agonist for both PKR1/PROKR1 and PKR2/PROKR2. Potently contracts gastrointestinal (GI) smooth muscle. The polypeptide is Toxin MIT1 (Dendroaspis polylepis polylepis (Black mamba)).